A 578-amino-acid polypeptide reads, in one-letter code: CTP synthase 2 (578 aa).

Positions 305–564 (KIALVGKYTN…VAAASGTLGE (260 aa)) constitute a Glutamine amidotransferase type-1 domain. Catalysis depends on for GATase activity residues Cys404, His537, and Glu539.

It belongs to the CTP synthase family. In terms of assembly, homodimer. Oligomerizes to a tetramer in the presence of its substrates UTP and ATP. It depends on Mg(2+) as a cofactor.

Its subcellular location is the cytoplasm. It catalyses the reaction UTP + L-glutamine + ATP + H2O = CTP + L-glutamate + ADP + phosphate + 2 H(+). The protein operates within pyrimidine metabolism; CTP biosynthesis via de novo pathway; CTP from UDP: step 2/2. Activated by GTP. Subject to allosteric product inhibition by CTP. Inhibited by p-chloromercuriphenylsulfonic acid, N-ethylmaleimide and cyclopentenylcytosine (CPEC). Catalyzes the ATP-dependent amination of UTP to CTP with either L-glutamine or ammonia as the source of nitrogen. Plays an important role in the regulation of phospholipid synthesis. This Saccharomyces cerevisiae (strain ATCC 204508 / S288c) (Baker's yeast) protein is CTP synthase 2 (URA8).